Reading from the N-terminus, the 250-residue chain is Biosynthetic peptidoglycan transglycosylase (250 aa).

Residues 15-35 (AVLLFFVSSLGFVLLYRFVPV) form a helical membrane-spanning segment.

The protein belongs to the glycosyltransferase 51 family.

The protein resides in the cell inner membrane. The enzyme catalyses [GlcNAc-(1-&gt;4)-Mur2Ac(oyl-L-Ala-gamma-D-Glu-L-Lys-D-Ala-D-Ala)](n)-di-trans,octa-cis-undecaprenyl diphosphate + beta-D-GlcNAc-(1-&gt;4)-Mur2Ac(oyl-L-Ala-gamma-D-Glu-L-Lys-D-Ala-D-Ala)-di-trans,octa-cis-undecaprenyl diphosphate = [GlcNAc-(1-&gt;4)-Mur2Ac(oyl-L-Ala-gamma-D-Glu-L-Lys-D-Ala-D-Ala)](n+1)-di-trans,octa-cis-undecaprenyl diphosphate + di-trans,octa-cis-undecaprenyl diphosphate + H(+). Its pathway is cell wall biogenesis; peptidoglycan biosynthesis. Functionally, peptidoglycan polymerase that catalyzes glycan chain elongation from lipid-linked precursors. The polypeptide is Biosynthetic peptidoglycan transglycosylase (Bdellovibrio bacteriovorus (strain ATCC 15356 / DSM 50701 / NCIMB 9529 / HD100)).